We begin with the raw amino-acid sequence, 415 residues long: Serine hydroxymethyltransferase (415 aa).

Residues L121 and G125–L127 each bind (6S)-5,6,7,8-tetrahydrofolate. K229 is modified (N6-(pyridoxal phosphate)lysine). Position 352–354 (T352–F354) interacts with (6S)-5,6,7,8-tetrahydrofolate.

This sequence belongs to the SHMT family. In terms of assembly, homodimer. Pyridoxal 5'-phosphate is required as a cofactor.

It is found in the cytoplasm. It catalyses the reaction (6R)-5,10-methylene-5,6,7,8-tetrahydrofolate + glycine + H2O = (6S)-5,6,7,8-tetrahydrofolate + L-serine. Its pathway is one-carbon metabolism; tetrahydrofolate interconversion. It participates in amino-acid biosynthesis; glycine biosynthesis; glycine from L-serine: step 1/1. Catalyzes the reversible interconversion of serine and glycine with tetrahydrofolate (THF) serving as the one-carbon carrier. This reaction serves as the major source of one-carbon groups required for the biosynthesis of purines, thymidylate, methionine, and other important biomolecules. Also exhibits THF-independent aldolase activity toward beta-hydroxyamino acids, producing glycine and aldehydes, via a retro-aldol mechanism. The polypeptide is Serine hydroxymethyltransferase (Chromobacterium violaceum (strain ATCC 12472 / DSM 30191 / JCM 1249 / CCUG 213 / NBRC 12614 / NCIMB 9131 / NCTC 9757 / MK)).